A 382-amino-acid polypeptide reads, in one-letter code: uncharacterized protein (382 aa).

12 helical membrane-spanning segments follow: residues 14 to 34 (GLLLLTLAIAVLNTLVPLWLA), 45 to 65 (VVSSSYFTGNLVGTLLTGYVI), 75 to 95 (YLASFIFAAGCAGLGLMIGFW), 102 to 122 (FVAGVGCAMIWVVVESALMCS), 131 to 151 (LLAAYMMVYYVGTFLGQLLVS), 157 to 177 (LMSVLPWVTGLTLAGILPLLF), 206 to 226 (VNGCIISGIVLGSLYGLMPLF), 235 to 255 (ASIGFWMAVLVSAGILGQWPI), 270 to 290 (VQVFVVILGSIAMLSQAAMAP), 291 to 311 (ALFILGAAGFTLYPVAMAWAC), 325 to 345 (ALLLSYTVGSLLGPSFTAMLM), and 348 to 368 (FSDNLLFIMIASVSFIYLLML).

The protein belongs to the major facilitator superfamily. YcaD (TC 2.A.1.26) family.

The protein resides in the cell inner membrane. This is an uncharacterized protein from Escherichia coli O17:K52:H18 (strain UMN026 / ExPEC).